The chain runs to 190 residues: UPF0340 protein BCE33L5016 (190 aa).

It belongs to the UPF0340 family.

This chain is UPF0340 protein BCE33L5016, found in Bacillus cereus (strain ZK / E33L).